Consider the following 397-residue polypeptide: Phosphoglycerate kinase (397 aa).

Residues Asp-23–Asn-25, Arg-38, His-61–Arg-64, Arg-119, and Arg-152 each bind substrate. Residues Lys-202, Glu-324, and Gly-354 to Thr-357 contribute to the ATP site.

This sequence belongs to the phosphoglycerate kinase family. In terms of assembly, monomer.

The protein resides in the cytoplasm. The catalysed reaction is (2R)-3-phosphoglycerate + ATP = (2R)-3-phospho-glyceroyl phosphate + ADP. The protein operates within carbohydrate degradation; glycolysis; pyruvate from D-glyceraldehyde 3-phosphate: step 2/5. In Xanthobacter flavus, this protein is Phosphoglycerate kinase (pgk).